A 308-amino-acid chain; its full sequence is Probable GTP 3',8-cyclase (308 aa).

A Radical SAM core domain is found at 4-222 (RFGRPLEDLR…KKLIRKKHFR (219 aa)). Arginine 13 lines the GTP pocket. Cysteine 20, cysteine 24, and cysteine 27 together coordinate [4Fe-4S] cluster. Lysine 60 is a binding site for GTP. Glycine 64 is a binding site for S-adenosyl-L-methionine. Threonine 90 serves as a coordination point for GTP. Serine 114 contributes to the S-adenosyl-L-methionine binding site. GTP is bound at residue lysine 151. [4Fe-4S] cluster contacts are provided by cysteine 245 and cysteine 248. 250–252 (RIR) lines the GTP pocket. Cysteine 262 lines the [4Fe-4S] cluster pocket.

It belongs to the radical SAM superfamily. MoaA family. The cofactor is [4Fe-4S] cluster.

The enzyme catalyses GTP + AH2 + S-adenosyl-L-methionine = (8S)-3',8-cyclo-7,8-dihydroguanosine 5'-triphosphate + 5'-deoxyadenosine + L-methionine + A + H(+). The protein operates within cofactor biosynthesis; molybdopterin biosynthesis. In terms of biological role, catalyzes the cyclization of GTP to (8S)-3',8-cyclo-7,8-dihydroguanosine 5'-triphosphate. This is Probable GTP 3',8-cyclase from Saccharolobus solfataricus (strain ATCC 35092 / DSM 1617 / JCM 11322 / P2) (Sulfolobus solfataricus).